We begin with the raw amino-acid sequence, 225 residues long: Uridylate kinase (225 aa).

9–10 is an ATP binding site; the sequence is GS. Gly-44 is a binding site for UMP. Residues Gly-45 and Arg-49 each coordinate ATP. UMP contacts are provided by residues Asp-66 and 114 to 120; that span reads THPGHTT. The ATP site is built by Thr-140, Asn-141, Tyr-146, and Asp-149.

Belongs to the UMP kinase family. In terms of assembly, homohexamer.

The protein localises to the cytoplasm. The catalysed reaction is UMP + ATP = UDP + ADP. It functions in the pathway pyrimidine metabolism; CTP biosynthesis via de novo pathway; UDP from UMP (UMPK route): step 1/1. Inhibited by UTP. In terms of biological role, catalyzes the reversible phosphorylation of UMP to UDP. This chain is Uridylate kinase, found in Thermococcus gammatolerans (strain DSM 15229 / JCM 11827 / EJ3).